We begin with the raw amino-acid sequence, 288 residues long: Transmembrane protein 163 (288 aa).

Basic and acidic residues predominate over residues 1 to 11 (MERAPGSERRS). A disordered region spans residues 1-64 (MERAPGSERR…ESGQFSDGFE (64 aa)). Over 1 to 87 (MERAPGSERR…HEAQNYRKKA (87 aa)) the chain is Cytoplasmic. The residue at position 11 (Ser11) is a Phosphoserine. Pro residues predominate over residues 12–24 (PPGPGVPRPPPRG). Low complexity predominate over residues 25-42 (HAPSTAAPAPNPAPLSSS). The interval 41 to 71 (SSMQPDEERQPRISESGQFSDGFEDRGLLES) is required for interaction with MCOLN1. Phosphoserine is present on residues Ser54, Ser56, and Ser60. Residues 88–108 (LWVSWLSIIVTLALAVAAFTV) form a helical membrane-spanning segment. Topologically, residues 109–115 (SVMRYSA) are extracellular. Residues 116-136 (SAFGFAFDAILDVLSSAIVLW) form a helical membrane-spanning segment. The Cytoplasmic segment spans residues 137 to 149 (RYSNAAAVHSAHR). Residues 150 to 170 (EYIACVILGVIFLLSSICIVV) traverse the membrane as a helical segment. Residues 171-186 (KAIHDLSTRLLPEVDD) lie on the Extracellular side of the membrane. The chain crosses the membrane as a helical span at residues 187–207 (FLFSVSILSGILCSVLAVLKF). Residues 208–216 (MLGKVLTSR) are Cytoplasmic-facing. Residues 217-237 (ALITDGFNSLVGGVMGFSILL) form a helical membrane-spanning segment. Topologically, residues 238–254 (SAEVFKHNAAVWYLDGS) are extracellular. Residues 255 to 275 (IGVLIGLTIFAYGVKLLIDMV) traverse the membrane as a helical segment. The Cytoplasmic segment spans residues 276–288 (PRVRQTRHYEMFE).

The protein belongs to the TMEM163 family. In terms of assembly, homodimer. Interacts with MCOLN1. Interacts with SLC30A1, SLC30A2, SLC30A3 and SLC30A4. As to expression, strongly expressed in brain. Also detected in lung, liver, kidney and spleen. Mainly expressed in the glutaminergic neuron subpopulations.

The protein resides in the cytoplasmic vesicle. Its subcellular location is the secretory vesicle. The protein localises to the synaptic vesicle membrane. It is found in the early endosome membrane. It localises to the late endosome membrane. The protein resides in the lysosome membrane. Its subcellular location is the cell membrane. It catalyses the reaction Zn(2+)(in) = Zn(2+)(out). Its function is as follows. Zinc ion transporter that mediates zinc efflux and plays a crucial role in intracellular zinc homeostasis. Binds the divalent cations Zn(2+), Ni(2+), and to a minor extent Cu(2+). Is a functional modulator of P2X purinoceptors, including P2RX1, P2RX3, P2RX4 and P2RX7. Plays a role in central nervous system development and is required for myelination, and survival and proliferation of oligodendrocytes. This is Transmembrane protein 163 (Tmem163) from Rattus norvegicus (Rat).